Reading from the N-terminus, the 419-residue chain is Odorant receptor 56a (419 aa).

Residues 1–41 lie on the Cytoplasmic side of the membrane; it reads MFKVKDLLLSPTTFEDPIFGTHLRYFQWYGYVASKDQNRPL. Residues 42–62 form a helical membrane-spanning segment; the sequence is LSLIRCTILTASIWLSCALML. Over 63 to 76 the chain is Extracellular; that stretch reads ARVFRGYENLNDGA. A helical transmembrane segment spans residues 77–97; it reads TSYATAVQYFAVSIAMFNAYV. The Cytoplasmic portion of the chain corresponds to 98 to 137; that stretch reads QRDKVISLLRVAHSDIQNLMHEADNREMELLVATQAYTRT. A helical transmembrane segment spans residues 138 to 158; it reads ITLLIWIPSVIAGLMAYSDCI. At 159–196 the chain is on the extracellular side; the sequence is YRSLFLPKSVFNVPAVRRGEEHPILLFQLFPFGELCDN. A helical membrane pass occupies residues 197–217; it reads FVVGYLGPWYALGLGITAIPL. Topologically, residues 218–292 are cytoplasmic; the sequence is WHTFITCLMK…FVQELQYLIC (75 aa). A helical membrane pass occupies residues 293 to 313; the sequence is VPVMADFIIFSVLICFLFFAL. The Extracellular segment spans residues 314–323; sequence TVGVPSKMDY. A helical membrane pass occupies residues 324–344; it reads FFMFIYLFVMAGILWIYHWHA. Residues 345-389 lie on the Cytoplasmic side of the membrane; that stretch reads TLIVECHDELSLAYFSCGWYNFEMPLQKMLVFMMMHAQRPMKMRA. Residues 390-410 form a helical membrane-spanning segment; the sequence is LLVDLNLRTFIDIGRGAYSYF. Residues 411 to 419 are Extracellular-facing; the sequence is NLLRSSHLY.

The protein belongs to the insect chemoreceptor superfamily. Heteromeric odorant receptor channel (TC 1.A.69) family. Or30a subfamily. Interacts with Orco. Complexes exist early in the endomembrane system in olfactory sensory neurons (OSNs), coupling these complexes to the conserved ciliary trafficking pathway. Expressed in olfactory sensory neurons in the antenna.

It localises to the cell membrane. Odorant receptor which mediates acceptance or avoidance behavior, depending on its substrates. The odorant receptor repertoire encodes a large collection of odor stimuli that vary widely in identity, intensity, and duration. May form a complex with Orco to form odorant-sensing units, providing sensitive and prolonged odorant signaling and calcium permeability. Specific receptor for geosmin, a microbial odorant that constitutes an ecologically relevant stimulus that alerts flies to the presence of harmful microbes and induces avoidance behavior. This chain is Odorant receptor 56a (Or56a), found in Drosophila melanogaster (Fruit fly).